A 793-amino-acid chain; its full sequence is DnaJ homolog subfamily C member 10 (793 aa).

An N-terminal signal peptide occupies residues 1-32 (MGVWLNKDDYIRDLKRIILCFLIVYMAILVGT). One can recognise a J domain in the interval 35-100 (DFYSLLGVSK…DLRKKYDKYG (66 aa)). The 103-residue stretch at 130–232 (EIITLERREF…ESLVSFAMQH (103 aa)) folds into the Thioredoxin 1 domain. A disulfide bond links cysteine 158 and cysteine 161. 2 trxb regions span residues 235-350 (STVT…LPDF) and 348-463 (PDFE…PQNF). Thioredoxin domains are found at residues 454–553 (HVTT…IEDL), 557–662 (SVVS…SLRI), and 671–778 (VSTD…ISEK). A disulfide bridge links cysteine 480 with cysteine 483. The N-linked (GlcNAc...) asparagine glycan is linked to asparagine 530. 2 disulfides stabilise this stretch: cysteine 588/cysteine 591 and cysteine 700/cysteine 703. Residues 790–793 (KDEL) carry the Prevents secretion from ER motif.

In terms of assembly, interacts with EDEM1. Interacts with HSPA5 (via its J domain).

The protein resides in the endoplasmic reticulum lumen. In terms of biological role, endoplasmic reticulum disulfide reductase involved both in the correct folding of proteins and degradation of misfolded proteins. Required for efficient folding of proteins in the endoplasmic reticulum by catalyzing the removal of non-native disulfide bonds formed during the folding of proteins, such as LDLR. Also involved in endoplasmic reticulum-associated degradation (ERAD) by reducing incorrect disulfide bonds in misfolded glycoproteins recognized by EDEM1. Interaction with HSPA5 is required its activity, not for the disulfide reductase activity, but to facilitate the release of DNAJC10 from its substrate. Promotes apoptotic signaling pathway in response to endoplasmic reticulum stress. In Homo sapiens (Human), this protein is DnaJ homolog subfamily C member 10 (DNAJC10).